Reading from the N-terminus, the 719-residue chain is Phosphoribosylformylglycinamidine synthase subunit PurL (719 aa).

The active site involves histidine 45. ATP-binding residues include tyrosine 48 and lysine 87. A Mg(2+)-binding site is contributed by glutamate 89. Substrate is bound by residues 90-93 (SHNH) and arginine 112. The Proton acceptor role is filled by histidine 91. Residue aspartate 113 coordinates Mg(2+). Glutamine 236 is a substrate binding site. Residue aspartate 264 participates in Mg(2+) binding. Substrate is bound at residue 308–310 (ESQ). Residues asparagine 493 and glycine 530 each contribute to the ATP site. Asparagine 531 serves as a coordination point for Mg(2+). Residue serine 533 coordinates substrate.

This sequence belongs to the FGAMS family. In terms of assembly, monomer. Part of the FGAM synthase complex composed of 1 PurL, 1 PurQ and 2 PurS subunits.

It localises to the cytoplasm. It carries out the reaction N(2)-formyl-N(1)-(5-phospho-beta-D-ribosyl)glycinamide + L-glutamine + ATP + H2O = 2-formamido-N(1)-(5-O-phospho-beta-D-ribosyl)acetamidine + L-glutamate + ADP + phosphate + H(+). It functions in the pathway purine metabolism; IMP biosynthesis via de novo pathway; 5-amino-1-(5-phospho-D-ribosyl)imidazole from N(2)-formyl-N(1)-(5-phospho-D-ribosyl)glycinamide: step 1/2. Part of the phosphoribosylformylglycinamidine synthase complex involved in the purines biosynthetic pathway. Catalyzes the ATP-dependent conversion of formylglycinamide ribonucleotide (FGAR) and glutamine to yield formylglycinamidine ribonucleotide (FGAM) and glutamate. The FGAM synthase complex is composed of three subunits. PurQ produces an ammonia molecule by converting glutamine to glutamate. PurL transfers the ammonia molecule to FGAR to form FGAM in an ATP-dependent manner. PurS interacts with PurQ and PurL and is thought to assist in the transfer of the ammonia molecule from PurQ to PurL. The sequence is that of Phosphoribosylformylglycinamidine synthase subunit PurL from Novosphingobium aromaticivorans (strain ATCC 700278 / DSM 12444 / CCUG 56034 / CIP 105152 / NBRC 16084 / F199).